The sequence spans 60 residues: Potassium channel toxin alpha-KTx 29.1 (60 aa).

The signal sequence occupies residues 1 to 28 (MKSVCGVLIILVVLTTMLSISTFSTVGA). Disulfide bonds link C32-C51, C40-C56, and C44-C58.

This sequence belongs to the short scorpion toxin superfamily. Potassium channel inhibitor family. Alpha-KTx 29 subfamily. Expressed by the venom gland.

Its subcellular location is the secreted. Weakly inhibits the Kv1.3/KCNA3 channel (1 uM of the toxin inhibits currents by 13.2%) and Kv7.1/KCNQ1 channel (10 uM of the toxin inhibits currents by 27.7%). The sequence is that of Potassium channel toxin alpha-KTx 29.1 from Lychas mucronatus (Chinese swimming scorpion).